Here is a 319-residue protein sequence, read N- to C-terminus: Thioredoxin reductase (319 aa).

Residues 11–14 (SGPA), 40–41 (VA), Q45, N54, V87, C145, D288, and 295–297 (RQA) each bind FAD. C142 and C145 are joined by a disulfide.

It belongs to the class-II pyridine nucleotide-disulfide oxidoreductase family. As to quaternary structure, homodimer. The cofactor is FAD.

It is found in the cytoplasm. It catalyses the reaction [thioredoxin]-dithiol + NADP(+) = [thioredoxin]-disulfide + NADPH + H(+). This Eremothecium gossypii (strain ATCC 10895 / CBS 109.51 / FGSC 9923 / NRRL Y-1056) (Yeast) protein is Thioredoxin reductase (TRR1).